The primary structure comprises 371 residues: Opine oxidase subunit B (371 aa).

Heterodimer of a subunit A and a subunit B.

The protein operates within opine metabolism; octopine degradation. Its function is as follows. Oxidative cleavage of octopine into L-arginine and pyruvate. The protein is Opine oxidase subunit B (ooxB) of Rhizobium meliloti (Ensifer meliloti).